A 195-amino-acid chain; its full sequence is Pyridoxal 5'-phosphate synthase subunit PdxT (195 aa).

An L-glutamine-binding site is contributed by 53–55 (GES). Residue cysteine 82 is the Nucleophile of the active site. Residues arginine 108 and 134–135 (IR) each bind L-glutamine. Catalysis depends on charge relay system residues histidine 173 and glutamate 175.

The protein belongs to the glutaminase PdxT/SNO family. As to quaternary structure, in the presence of PdxS, forms a dodecamer of heterodimers. Only shows activity in the heterodimer.

The enzyme catalyses aldehydo-D-ribose 5-phosphate + D-glyceraldehyde 3-phosphate + L-glutamine = pyridoxal 5'-phosphate + L-glutamate + phosphate + 3 H2O + H(+). It catalyses the reaction L-glutamine + H2O = L-glutamate + NH4(+). The protein operates within cofactor biosynthesis; pyridoxal 5'-phosphate biosynthesis. In terms of biological role, catalyzes the hydrolysis of glutamine to glutamate and ammonia as part of the biosynthesis of pyridoxal 5'-phosphate. The resulting ammonia molecule is channeled to the active site of PdxS. The chain is Pyridoxal 5'-phosphate synthase subunit PdxT from Methanobrevibacter smithii (strain ATCC 35061 / DSM 861 / OCM 144 / PS).